Reading from the N-terminus, the 379-residue chain is Elongation factor Ts, mitochondrial (379 aa).

The N-terminal 45 residues, 1-45 (MALYRTARRPLQMMLFSRLGNPEQNYSSWARKDASQSAFGMFVRL), are a transit peptide targeting the mitochondrion.

It belongs to the EF-Ts family.

The protein localises to the mitochondrion. Associates with the EF-Tu.GDP complex and induces the exchange of GDP to GTP. It remains bound to the aminoacyl-tRNA.EF-Tu.GTP complex up to the GTP hydrolysis stage on the ribosome. This is Elongation factor Ts, mitochondrial from Ricinus communis (Castor bean).